The primary structure comprises 191 residues: Prophage tail fiber assembly protein homolog TfaR (191 aa).

Belongs to the tfa family.

In Escherichia coli (strain K12), this protein is Prophage tail fiber assembly protein homolog TfaR (tfaR).